A 179-amino-acid polypeptide reads, in one-letter code: Cellular nucleic acid-binding protein homolog (179 aa).

7 consecutive CCHC-type zinc fingers follow at residues 17 to 34 (PRCYNCGENGHQARECTK), 36 to 53 (SICYNCNQTGHKASECTE), 58 to 75 (KTCYACGTAGHLVRDCPS), 83 to 100 (AECYKCGRVGHIARDCRT), 116 to 133 (MNCYACGSYGHQARDCTM), 135 to 152 (VKCYSCGKIGHRSFECQQ), and 157 to 174 (QLCYKCNQPGHIAVNCTS).

To human CNBP and to retroviral nucleic acid binding proteins (NBP). Post-translationally, phosphorylated.

The protein resides in the nucleus. In terms of biological role, acts in the sexual differentiation pathway. Is required for efficient conjugation. Double-stranded DNA-binding protein. This Schizosaccharomyces pombe (strain 972 / ATCC 24843) (Fission yeast) protein is Cellular nucleic acid-binding protein homolog (byr3).